We begin with the raw amino-acid sequence, 878 residues long: Alanine--tRNA ligase (878 aa).

Positions 568, 572, 669, and 673 each coordinate Zn(2+).

The protein belongs to the class-II aminoacyl-tRNA synthetase family. It depends on Zn(2+) as a cofactor.

It localises to the cytoplasm. It carries out the reaction tRNA(Ala) + L-alanine + ATP = L-alanyl-tRNA(Ala) + AMP + diphosphate. Functionally, catalyzes the attachment of alanine to tRNA(Ala) in a two-step reaction: alanine is first activated by ATP to form Ala-AMP and then transferred to the acceptor end of tRNA(Ala). Also edits incorrectly charged Ser-tRNA(Ala) and Gly-tRNA(Ala) via its editing domain. This Polaromonas sp. (strain JS666 / ATCC BAA-500) protein is Alanine--tRNA ligase.